The following is a 513-amino-acid chain: Histidine ammonia-lyase (513 aa).

Residues 142–144 (ASG) constitute a cross-link (5-imidazolinone (Ala-Gly)). Ser-143 carries the post-translational modification 2,3-didehydroalanine (Ser).

It belongs to the PAL/histidase family. Contains an active site 4-methylidene-imidazol-5-one (MIO), which is formed autocatalytically by cyclization and dehydration of residues Ala-Ser-Gly.

Its subcellular location is the cytoplasm. The enzyme catalyses L-histidine = trans-urocanate + NH4(+). The protein operates within amino-acid degradation; L-histidine degradation into L-glutamate; N-formimidoyl-L-glutamate from L-histidine: step 1/3. The polypeptide is Histidine ammonia-lyase (Roseobacter denitrificans (strain ATCC 33942 / OCh 114) (Erythrobacter sp. (strain OCh 114))).